We begin with the raw amino-acid sequence, 570 residues long: Urease subunit alpha (570 aa).

The region spanning 131-570 (GGFDAHIHFI…LPMAQRYFLF (440 aa)) is the Urease domain. His-136, His-138, and Lys-219 together coordinate Ni(2+). Lys-219 is modified (N6-carboxylysine). His-221 serves as a coordination point for substrate. Positions 248 and 274 each coordinate Ni(2+). His-322 functions as the Proton donor in the catalytic mechanism. Residue Asp-362 participates in Ni(2+) binding.

This sequence belongs to the metallo-dependent hydrolases superfamily. Urease alpha subunit family. Heterotrimer of UreA (gamma), UreB (beta) and UreC (alpha) subunits. Three heterotrimers associate to form the active enzyme. The cofactor is Ni cation. In terms of processing, carboxylation allows a single lysine to coordinate two nickel ions.

The protein resides in the cytoplasm. The enzyme catalyses urea + 2 H2O + H(+) = hydrogencarbonate + 2 NH4(+). The protein operates within nitrogen metabolism; urea degradation; CO(2) and NH(3) from urea (urease route): step 1/1. This chain is Urease subunit alpha, found in Mesorhizobium japonicum (strain LMG 29417 / CECT 9101 / MAFF 303099) (Mesorhizobium loti (strain MAFF 303099)).